A 719-amino-acid polypeptide reads, in one-letter code: Cyclin-dependent kinase 11.1 (719 aa).

Composition is skewed to basic and acidic residues over residues 1–20 (MSDHLGSSHDEGELSDESHK), 38–48 (KGLESKMRESI), and 78–129 (KAKE…DQKV). Disordered stretches follow at residues 1 to 215 (MSDH…KDDD) and 231 to 315 (EEKE…EMTE). The segment covering 130–140 (HEHRHHHHHRK) has biased composition (basic residues). Basic and acidic residues predominate over residues 141-163 (HETDGHRTNRSNRDRSSERDSEK). Residues 164-174 (HKRHIDRHKKS) are compositionally biased toward basic residues. Composition is skewed to basic and acidic residues over residues 191–215 (HTDVPADAKLFDRILDPNYKKKDDD) and 264–274 (DDTKPKSPGKA). Over residues 275–285 (EDDDDVIEVLD) the composition is skewed to acidic residues. One can recognise a Protein kinase domain in the interval 356–647 (YECVNRVDEG…ATQALDHEWF (292 aa)). ATP contacts are provided by residues 362–370 (VDEGTFGVV) and Lys385. Asp484 (proton acceptor) is an active-site residue. The interval 657 to 689 (EEFPTFPAKSEQNKAPPPAKQKQQENRISHVDP) is disordered. Positions 678–689 (KQQENRISHVDP) are enriched in basic and acidic residues.

It belongs to the protein kinase superfamily. CMGC Ser/Thr protein kinase family. CDC2/CDKX subfamily. In terms of tissue distribution, broadly expressed in somatic and germ line cells (at protein level). Not expressed in sperm (at protein level).

The protein localises to the nucleus. It catalyses the reaction L-seryl-[protein] + ATP = O-phospho-L-seryl-[protein] + ADP + H(+). The catalysed reaction is L-threonyl-[protein] + ATP = O-phospho-L-threonyl-[protein] + ADP + H(+). Functionally, probable cyclin-dependent kinase whose activity is most likely regulated by the cyclin cyl-1/Cylin-L. Important for normal oocyte and sperm development; probably required during multiple stages of gametogenesis. Plays a role in the activation of RAS-ERK signaling in the germ line. Also acts partially redundantly with cdk-11.2 to ensure embryonic viability. This chain is Cyclin-dependent kinase 11.1, found in Caenorhabditis elegans.